Consider the following 150-residue polypeptide: UPF0756 membrane protein ACICU_02320 (150 aa).

The next 4 membrane-spanning stretches (helical) occupy residues Met-1–Leu-21, Phe-45–Val-65, Phe-83–Gly-103, and Val-115–Val-135.

This sequence belongs to the UPF0756 family.

Its subcellular location is the cell membrane. In Acinetobacter baumannii (strain ACICU), this protein is UPF0756 membrane protein ACICU_02320.